We begin with the raw amino-acid sequence, 226 residues long: Phosphoglycolate phosphatase (226 aa).

The Nucleophile role is filled by Asp-12. Mg(2+) contacts are provided by Asp-12, Asp-14, and Asp-177.

The protein belongs to the HAD-like hydrolase superfamily. CbbY/CbbZ/Gph/YieH family. The cofactor is Mg(2+).

It catalyses the reaction 2-phosphoglycolate + H2O = glycolate + phosphate. It participates in organic acid metabolism; glycolate biosynthesis; glycolate from 2-phosphoglycolate: step 1/1. In terms of biological role, specifically catalyzes the dephosphorylation of 2-phosphoglycolate. Is involved in the dissimilation of the intracellular 2-phosphoglycolate formed during the DNA repair of 3'-phosphoglycolate ends, a major class of DNA lesions induced by oxidative stress. The sequence is that of Phosphoglycolate phosphatase from Colwellia psychrerythraea (strain 34H / ATCC BAA-681) (Vibrio psychroerythus).